Here is a 359-residue protein sequence, read N- to C-terminus: AA9 family lytic polysaccharide monooxygenase C (359 aa).

Residues 1-16 form the signal peptide; it reads MKTGSILAALVASASA. Positions 17 and 99 each coordinate Cu(2+). 2 disulfides stabilise this stretch: Cys-55–Cys-185 and Cys-155–Cys-243. Residues His-171 and Gln-180 each contribute to the O2 site. Residue Tyr-182 participates in Cu(2+) binding. N-linked (GlcNAc...) asparagine glycosylation is found at Asn-189 and Asn-284. The tract at residues 244-320 is disordered; that stretch reads PAGGSGGSSP…NPQPTNGGNS (77 aa). The segment covering 251-296 has biased composition (low complexity); the sequence is SSPAPATTASTPKPTSASAPKPVSTTASTPKPTNGSGSGTGAAHST. The segment covering 307 to 319 has biased composition (polar residues); it reads TKASNPQPTNGGN. In terms of domain architecture, CBM1 spans 323–358; sequence RAAALYGQCGGKGWTGPTSCASGTCKFSNDWYSQCL.

Belongs to the polysaccharide monooxygenase AA9 family. Cu(2+) is required as a cofactor.

It is found in the secreted. The enzyme catalyses [(1-&gt;4)-beta-D-glucosyl]n+m + reduced acceptor + O2 = 4-dehydro-beta-D-glucosyl-[(1-&gt;4)-beta-D-glucosyl]n-1 + [(1-&gt;4)-beta-D-glucosyl]m + acceptor + H2O.. Activity in inhibited by excessive amounts of H(2)O(2). Lytic polysaccharide monooxygenase (LPMO) that depolymerizes crystalline and amorphous polysaccharides via the oxidation of scissile alpha- or beta-(1-4)-glycosidic bonds, yielding C4 oxidation products. Catalysis by LPMOs requires the reduction of the active-site copper from Cu(II) to Cu(I) by a reducing agent and H(2)O(2) or O(2) as a cosubstrate. Degrades various hemicelluloses, in particular xyloglucan. Active on tamarind xyloglucan and konjac glucomannan. Acts on the glucose backbone of xyloglucan, accepting various substitutions (xylose, galactose) in almost allpositions. In contrast to all previously characterized LPMOs, which are active only on polysaccharides, is able to cleave soluble cello-oligosaccharides as short as a tetramer. The cello-oligosaccharide products released by this enzyme contain a C4 gemdiol/keto group at the non-reducing end. Binds to the inner wood cell wall layer and consumes enzymatically generated H(2)O(2). The protein is AA9 family lytic polysaccharide monooxygenase C (gh61-3) of Neurospora crassa (strain ATCC 24698 / 74-OR23-1A / CBS 708.71 / DSM 1257 / FGSC 987).